The sequence spans 209 residues: Uracil phosphoribosyltransferase (209 aa).

Residues arginine 79, arginine 104, and 131–139 contribute to the 5-phospho-alpha-D-ribose 1-diphosphate site; that span reads DPMLATGGS. Uracil contacts are provided by residues isoleucine 194 and 199 to 201; that span reads GDA. Aspartate 200 contacts 5-phospho-alpha-D-ribose 1-diphosphate.

This sequence belongs to the UPRTase family. Mg(2+) serves as cofactor.

The catalysed reaction is UMP + diphosphate = 5-phospho-alpha-D-ribose 1-diphosphate + uracil. The protein operates within pyrimidine metabolism; UMP biosynthesis via salvage pathway; UMP from uracil: step 1/1. Its activity is regulated as follows. Allosterically activated by GTP. Catalyzes the conversion of uracil and 5-phospho-alpha-D-ribose 1-diphosphate (PRPP) to UMP and diphosphate. The sequence is that of Uracil phosphoribosyltransferase from Alkaliphilus metalliredigens (strain QYMF).